The chain runs to 67 residues: Large ribosomal subunit protein bL35 (67 aa).

The segment covering 1 to 16 (MPKMKTKSGAKKRFRV) has biased composition (basic residues). Positions 1–25 (MPKMKTKSGAKKRFRVRPGGTVKRG) are disordered.

The protein belongs to the bacterial ribosomal protein bL35 family.

This Polaromonas sp. (strain JS666 / ATCC BAA-500) protein is Large ribosomal subunit protein bL35.